A 90-amino-acid polypeptide reads, in one-letter code: Probable Fe(2+)-trafficking protein (90 aa).

This sequence belongs to the Fe(2+)-trafficking protein family.

Its function is as follows. Could be a mediator in iron transactions between iron acquisition and iron-requiring processes, such as synthesis and/or repair of Fe-S clusters in biosynthetic enzymes. The polypeptide is Probable Fe(2+)-trafficking protein (Cupriavidus pinatubonensis (strain JMP 134 / LMG 1197) (Cupriavidus necator (strain JMP 134))).